Consider the following 228-residue polypeptide: L-ribulose-5-phosphate 4-epimerase UlaF (228 aa).

Residues 26–27 (GN), 43–44 (SG), and 72–73 (SS) contribute to the substrate site. Residues aspartate 74, histidine 93, and histidine 95 each contribute to the Zn(2+) site. The Proton donor/acceptor role is filled by aspartate 118. Histidine 167 serves as a coordination point for Zn(2+). Tyrosine 225 acts as the Proton donor/acceptor in catalysis.

It belongs to the aldolase class II family. AraD/FucA subfamily. Requires Zn(2+) as cofactor.

It carries out the reaction L-ribulose 5-phosphate = D-xylulose 5-phosphate. It functions in the pathway cofactor degradation; L-ascorbate degradation; D-xylulose 5-phosphate from L-ascorbate: step 4/4. Functionally, catalyzes the isomerization of L-ribulose 5-phosphate to D-xylulose 5-phosphate. Is involved in the anaerobic L-ascorbate utilization. This chain is L-ribulose-5-phosphate 4-epimerase UlaF, found in Shigella dysenteriae serotype 1 (strain Sd197).